Consider the following 339-residue polypeptide: Ketol-acid reductoisomerase (NADP(+)) (339 aa).

In terms of domain architecture, KARI N-terminal Rossmann spans 1–182 (MRVYYDRDAD…GGGRSGVIET (182 aa)). NADP(+)-binding positions include 24–27 (YGSQ), R48, S51, T53, and 83–86 (DELQ). H108 is a catalytic residue. Residue G134 participates in NADP(+) binding. The region spanning 183-328 (TFKEECETDL…GKLRAMMPWI (146 aa)) is the KARI C-terminal knotted domain. 4 residues coordinate Mg(2+): D191, E195, E227, and E231. S252 contacts substrate.

The protein belongs to the ketol-acid reductoisomerase family. It depends on Mg(2+) as a cofactor.

It catalyses the reaction (2R)-2,3-dihydroxy-3-methylbutanoate + NADP(+) = (2S)-2-acetolactate + NADPH + H(+). It carries out the reaction (2R,3R)-2,3-dihydroxy-3-methylpentanoate + NADP(+) = (S)-2-ethyl-2-hydroxy-3-oxobutanoate + NADPH + H(+). It participates in amino-acid biosynthesis; L-isoleucine biosynthesis; L-isoleucine from 2-oxobutanoate: step 2/4. Its pathway is amino-acid biosynthesis; L-valine biosynthesis; L-valine from pyruvate: step 2/4. In terms of biological role, involved in the biosynthesis of branched-chain amino acids (BCAA). Catalyzes an alkyl-migration followed by a ketol-acid reduction of (S)-2-acetolactate (S2AL) to yield (R)-2,3-dihydroxy-isovalerate. In the isomerase reaction, S2AL is rearranged via a Mg-dependent methyl migration to produce 3-hydroxy-3-methyl-2-ketobutyrate (HMKB). In the reductase reaction, this 2-ketoacid undergoes a metal-dependent reduction by NADPH to yield (R)-2,3-dihydroxy-isovalerate. The polypeptide is Ketol-acid reductoisomerase (NADP(+)) (Brucella abortus (strain S19)).